The following is a 319-amino-acid chain: ATP-dependent 6-phosphofructokinase (319 aa).

Gly11 lines the ATP pocket. Position 21–25 (21–25) interacts with ADP; sequence RAVVR. ATP contacts are provided by residues 72–73 and 102–105; these read RC and GEGS. Glu103 contributes to the Mg(2+) binding site. Substrate is bound at residue 126–128; the sequence is TID. Asp128 functions as the Proton acceptor in the catalytic mechanism. ADP is bound at residue Lys155. Substrate-binding positions include Arg163 and 170 to 172; that span reads MGR. ADP is bound by residues 186-188, Arg212, and 214-216; these read GAE and KIN. Substrate is bound by residues Glu223, Arg244, and 250–253; that span reads HVQR.

It belongs to the phosphofructokinase type A (PFKA) family. ATP-dependent PFK group I subfamily. Prokaryotic clade 'B1' sub-subfamily. As to quaternary structure, homotetramer. Mg(2+) is required as a cofactor.

The protein localises to the cytoplasm. The enzyme catalyses beta-D-fructose 6-phosphate + ATP = beta-D-fructose 1,6-bisphosphate + ADP + H(+). It participates in carbohydrate degradation; glycolysis; D-glyceraldehyde 3-phosphate and glycerone phosphate from D-glucose: step 3/4. Allosterically activated by ADP and other diphosphonucleosides, and allosterically inhibited by phosphoenolpyruvate. Functionally, catalyzes the phosphorylation of D-fructose 6-phosphate to fructose 1,6-bisphosphate by ATP, the first committing step of glycolysis. The sequence is that of ATP-dependent 6-phosphofructokinase from Thermotoga petrophila (strain ATCC BAA-488 / DSM 13995 / JCM 10881 / RKU-1).